Consider the following 512-residue polypeptide: Kynurenine 3-monooxygenase (512 aa).

Belongs to the aromatic-ring hydroxylase family. KMO subfamily. FAD is required as a cofactor.

The protein localises to the mitochondrion outer membrane. It catalyses the reaction L-kynurenine + NADPH + O2 + H(+) = 3-hydroxy-L-kynurenine + NADP(+) + H2O. Its pathway is cofactor biosynthesis; NAD(+) biosynthesis; quinolinate from L-kynurenine: step 1/3. Its function is as follows. Catalyzes the hydroxylation of L-kynurenine (L-Kyn) to form 3-hydroxy-L-kynurenine (L-3OHKyn). Required for synthesis of quinolinic acid. The protein is Kynurenine 3-monooxygenase (nic-3) of Neurospora crassa (strain ATCC 24698 / 74-OR23-1A / CBS 708.71 / DSM 1257 / FGSC 987).